A 334-amino-acid chain; its full sequence is Formamidase (334 aa).

A CN hydrolase domain is found at 14–260; sequence FLVAAIQFPV…WEIVTGEIYP (247 aa). Glu60 (proton acceptor) is an active-site residue. Lys133 (proton donor) is an active-site residue. The Nucleophile role is filled by Cys166.

The protein belongs to the carbon-nitrogen hydrolase superfamily. Aliphatic amidase family.

It carries out the reaction formamide + H2O = formate + NH4(+). Is an aliphatic amidase with a restricted substrate specificity, as it only hydrolyzes formamide. The polypeptide is Formamidase (Helicobacter pylori (strain G27)).